Consider the following 41-residue polypeptide: Photosystem I reaction center subunit IX (41 aa).

A helical transmembrane segment spans residues 7-29; that stretch reads YLSTAPVLLTVWLSITASGIMII.

This sequence belongs to the PsaJ family.

It is found in the plastid. Its subcellular location is the chloroplast thylakoid membrane. Functionally, may help in the organization of the PsaE and PsaF subunits. This is Photosystem I reaction center subunit IX from Heterosigma akashiwo (strain NIES-293 / 8280G21-1).